We begin with the raw amino-acid sequence, 278 residues long: uncharacterized protein (278 aa).

Positions 1-11 are enriched in basic and acidic residues; it reads MMIHIHQDKKM. 2 disordered regions span residues 1 to 107 and 206 to 278; these read MMIH…RYFK and KVSA…KASR. Positions 62 to 94 are enriched in low complexity; sequence KQSGGKNAKSGSKSAKSGSKSAKSGSKTSKTQS. Positions 97–107 are enriched in basic and acidic residues; the sequence is KGDESRDRYFK. Residues 249-260 are compositionally biased toward polar residues; that stretch reads SAKNAKSTGNKK. Low complexity predominate over residues 264 to 278; that stretch reads KSAGAKKAPAAKASR.

This is an uncharacterized protein from Acanthamoeba polyphaga mimivirus (APMV).